A 307-amino-acid chain; its full sequence is Cyclin-dependent kinase 5 activator 1 (307 aa).

Ser8 carries the post-translational modification Phosphoserine; by CDK5. The interval 96–136 (STFAQPPPAQPPAPPANQLSGSQTGVSSSVKKAPHPSVTSA) is disordered. Over residues 100–110 (QPPPAQPPAPP) the composition is skewed to pro residues. Residues 112–125 (NQLSGSQTGVSSSV) show a composition bias toward polar residues. Residue Thr138 is modified to Phosphothreonine; by CDK5.

It belongs to the cyclin-dependent kinase 5 activator family. In terms of assembly, heterodimer composed of a catalytic subunit CDK5 and a regulatory subunit CDK5R1 (p25) and macromolecular complex composed of at least CDK5, CDK5R1 (p35) and CDK5RAP1 or CDK5RAP2 or CDK5RAP3. Only the heterodimer shows kinase activity. Interacts with EPHA4 and NGEF; may mediate the activation of NGEF by EPHA4. Interacts with RASGRF2. The complex p35/CDK5 interacts with CLOCK. The p35 form is proteolytically cleaved by calpain, giving rise to the p25 form. P35 has a 5 to 10 fold shorter half-life compared to p25. The conversion results in deregulation of the CDK5 kinase: p25/CDK5 kinase displays an increased and altered tau phosphorylation in comparison to the p35/CDK5 kinase in vivo. Post-translationally, myristoylated. A proper myristoylation signal is essential for the proper distribution of p35. In terms of processing, phosphorylation at Ser-8 and Thr-138 by CDK5 prevents calpain-mediated proteolysis. Ubiquitinated, leading to its degradation: degradation of p35 by proteasome results in down-regulation of CDK5 activity. During this process, CDK5 phosphorylates p35 and induces its ubiquitination and subsequent degradation. Ubiquitinated by the CRL2(FEM1B) complex, which recognizes the -Gly-Leu-Asp-Arg C-degron at the C-terminus, leading to its degradation. Brain and neuron specific.

The protein localises to the cell membrane. It localises to the cell projection. It is found in the neuron projection. Its subcellular location is the nucleus. The protein resides in the cytoplasm. The protein localises to the perinuclear region. It localises to the perikaryon. Its function is as follows. p35 is a neuron specific activator of CDK5. The complex p35/CDK5 is required for neurite outgrowth and cortical lamination. Involved in dendritic spine morphogenesis by mediating the EFNA1-EPHA4 signaling. Activator of TPKII. The complex p35/CDK5 participates in the regulation of the circadian clock by modulating the function of CLOCK protein: phosphorylates CLOCK at 'Thr-451' and 'Thr-461' and regulates the transcriptional activity of the CLOCK-BMAL1 heterodimer in association with altered stability and subcellular distribution. In Spermophilus citellus (European ground squirrel), this protein is Cyclin-dependent kinase 5 activator 1 (CDK5R1).